The primary structure comprises 431 residues: Polyprenol-phosphate-mannose-dependent alpha-(1-2)-phosphatidylinositol pentamannoside mannosyltransferase (431 aa).

10 helical membrane passes run 43 to 63 (AAVLLLVLSVGARLAWTYLAP), 108 to 128 (FAAVVFYPLHLVPFGLIALLW), 148 to 168 (GGTAETGHFAAMLWTAIAIWI), 175 to 195 (FDYGQINVLLMLAALWAVYTP), 202 to 222 (LLVGVASGVKLTPAITAVYLV), 229 to 249 (AAAFSVVVFLATVGVSLLVVG), 290 to 310 (GFGPLVLAAIASTAVLAILAW), 332 to 352 (LSPISWTHHWVWLVPLMIWLI), 364 to 384 (ILGWGWLVLTIVGVPWLLSFA), and 397 to 417 (LAWAGLVYVVATLATLGWIAA).

This sequence belongs to the glycosyltransferase 87 family.

The protein resides in the cell membrane. It functions in the pathway phospholipid metabolism; phosphatidylinositol metabolism. Functionally, catalyzes the alpha-1,2 addition of a mannose residue from polyprenol-phosphate-mannose (PPM) to a monoacyl phosphatidylinositol tetramannoside (AcPIM4) to generate a monoacyl phosphatidylinositol pentamannoside (AcPIM5). This Mycobacterium tuberculosis (strain CDC 1551 / Oshkosh) protein is Polyprenol-phosphate-mannose-dependent alpha-(1-2)-phosphatidylinositol pentamannoside mannosyltransferase (pimE).